A 1788-amino-acid polypeptide reads, in one-letter code: Protein TIC 214 (1788 aa).

The next 6 helical transmembrane spans lie at 25–45 (IINS…FSIG), 70–90 (IGFI…PLHL), 95–115 (PHTI…WNNH), 132–152 (LNIQ…HFIL), 180–200 (VGWL…LFWI), and 223–243 (IFSI…PSPL). 2 disordered regions span residues 248 to 297 (LKKT…EEKE) and 1482 to 1526 (DLEN…DFDR). Basic and acidic residues-rich tracts occupy residues 253–277 (KREE…EKGT) and 1513–1526 (PLKK…DFDR).

Belongs to the TIC214 family. In terms of assembly, part of the Tic complex.

It is found in the plastid. The protein resides in the chloroplast inner membrane. Functionally, involved in protein precursor import into chloroplasts. May be part of an intermediate translocation complex acting as a protein-conducting channel at the inner envelope. This Ranunculus macranthus (Large buttercup) protein is Protein TIC 214.